Consider the following 231-residue polypeptide: Female protein (231 aa).

The N-terminal stretch at Met1–Ala19 is a signal peptide. The region spanning Thr24–Ala223 is the Pentraxin (PTX) domain. N-linked (GlcNAc...) asparagine glycosylation is present at Asn51. Cysteines 55 and 114 form a disulfide. Positions 77, 78, 155, 156, 157, and 167 each coordinate Ca(2+).

Belongs to the pentraxin family. Homopentamer. Pentraxin (or pentaxin) have a discoid arrangement of 5 non-covalently bound subunits. Ca(2+) is required as a cofactor.

Its subcellular location is the secreted. In Nothocricetulus migratorius (Gray dwarf hamster), this protein is Female protein.